The following is a 180-amino-acid chain: NADH-quinone oxidoreductase subunit I (180 aa).

4Fe-4S ferredoxin-type domains are found at residues 50-80 (LTRD…LQKA) and 90-119 (EFFR…LTPD). 8 residues coordinate [4Fe-4S] cluster: Cys-60, Cys-63, Cys-66, Cys-70, Cys-99, Cys-102, Cys-105, and Cys-109.

The protein belongs to the complex I 23 kDa subunit family. In terms of assembly, NDH-1 is composed of 13 different subunits. Subunits NuoA, H, J, K, L, M, N constitute the membrane sector of the complex. Requires [4Fe-4S] cluster as cofactor.

It localises to the cell inner membrane. It catalyses the reaction a quinone + NADH + 5 H(+)(in) = a quinol + NAD(+) + 4 H(+)(out). Its function is as follows. NDH-1 shuttles electrons from NADH, via FMN and iron-sulfur (Fe-S) centers, to quinones in the respiratory chain. The immediate electron acceptor for the enzyme in this species is believed to be ubiquinone. Couples the redox reaction to proton translocation (for every two electrons transferred, four hydrogen ions are translocated across the cytoplasmic membrane), and thus conserves the redox energy in a proton gradient. In Salmonella choleraesuis (strain SC-B67), this protein is NADH-quinone oxidoreductase subunit I.